The primary structure comprises 188 residues: Elongation factor P (188 aa).

Position 34 is an N6-(3,6-diaminohexanoyl)-5-hydroxylysine (lysine 34).

The protein belongs to the elongation factor P family. May be beta-lysylated on the epsilon-amino group of Lys-34 by the combined action of EpmA and EpmB, and then hydroxylated on the C5 position of the same residue by EpmC (if this protein is present). Lysylation is critical for the stimulatory effect of EF-P on peptide-bond formation. The lysylation moiety may extend toward the peptidyltransferase center and stabilize the terminal 3-CCA end of the tRNA. Hydroxylation of the C5 position on Lys-34 may allow additional potential stabilizing hydrogen-bond interactions with the P-tRNA.

It localises to the cytoplasm. It functions in the pathway protein biosynthesis; polypeptide chain elongation. Involved in peptide bond synthesis. Alleviates ribosome stalling that occurs when 3 or more consecutive Pro residues or the sequence PPG is present in a protein, possibly by augmenting the peptidyl transferase activity of the ribosome. Modification of Lys-34 is required for alleviation. The polypeptide is Elongation factor P (Pseudoalteromonas translucida (strain TAC 125)).